The following is a 490-amino-acid chain: Glutamyl-tRNA(Gln) amidotransferase subunit A (490 aa).

Active-site charge relay system residues include K77 and S152. The active-site Acyl-ester intermediate is the S176.

It belongs to the amidase family. GatA subfamily. As to quaternary structure, heterotrimer of A, B and C subunits.

The catalysed reaction is L-glutamyl-tRNA(Gln) + L-glutamine + ATP + H2O = L-glutaminyl-tRNA(Gln) + L-glutamate + ADP + phosphate + H(+). Allows the formation of correctly charged Gln-tRNA(Gln) through the transamidation of misacylated Glu-tRNA(Gln) in organisms which lack glutaminyl-tRNA synthetase. The reaction takes place in the presence of glutamine and ATP through an activated gamma-phospho-Glu-tRNA(Gln). In Limosilactobacillus reuteri (strain DSM 20016) (Lactobacillus reuteri), this protein is Glutamyl-tRNA(Gln) amidotransferase subunit A.